The following is a 149-amino-acid chain: Deoxyuridine 5'-triphosphate nucleotidohydrolase (149 aa).

Residues 65 to 67 (RSG), Asn78, 82 to 84 (TID), and Lys92 contribute to the substrate site.

This sequence belongs to the dUTPase family. Mg(2+) is required as a cofactor.

The enzyme catalyses dUTP + H2O = dUMP + diphosphate + H(+). It participates in pyrimidine metabolism; dUMP biosynthesis; dUMP from dCTP (dUTP route): step 2/2. This enzyme is involved in nucleotide metabolism: it produces dUMP, the immediate precursor of thymidine nucleotides and it decreases the intracellular concentration of dUTP so that uracil cannot be incorporated into DNA. The sequence is that of Deoxyuridine 5'-triphosphate nucleotidohydrolase from Chlorobium chlorochromatii (strain CaD3).